A 520-amino-acid chain; its full sequence is Arabinose import ATP-binding protein AraG (520 aa).

Residues 1 to 10 (MTTQTMTAVS) show a composition bias toward polar residues. Positions 1–27 (MTTQTMTAVSGNDGDTGGDAAESPPGG) are disordered. 2 consecutive ABC transporter domains span residues 30–265 (LALD…MVGR) and 265–516 (RSIE…LIKL). ATP is bound at residue 62–69 (GENGAGKS).

It belongs to the ABC transporter superfamily. Arabinose importer (TC 3.A.1.2.2) family. In terms of assembly, the complex is composed of two ATP-binding proteins (AraG), two transmembrane proteins (AraH) and a solute-binding protein (AraF).

It localises to the cell inner membrane. The enzyme catalyses L-arabinose(out) + ATP + H2O = L-arabinose(in) + ADP + phosphate + H(+). Its function is as follows. Part of the ABC transporter complex AraFGH involved in L-arabinose import. Responsible for energy coupling to the transport system. This chain is Arabinose import ATP-binding protein AraG, found in Azospirillum brasilense.